The sequence spans 323 residues: Phospho-N-acetylmuramoyl-pentapeptide-transferase (323 aa).

9 helical membrane-spanning segments follow: residues 5–25 (SAVL…PSLI), 57–77 (LLFI…QGLI), 81–101 (LWAL…DDSI), 118–138 (LCQV…GFQM), 140–160 (FGTT…IVGF), 173–193 (LVSG…LVNL), 196–216 (PGYP…LGFF), 225–247 (IFMG…LLLH), and 302–322 (IVFW…ILLV).

Belongs to the glycosyltransferase 4 family. MraY subfamily. Mg(2+) serves as cofactor.

It localises to the cell membrane. It carries out the reaction UDP-N-acetyl-alpha-D-muramoyl-L-alanyl-gamma-D-glutamyl-L-lysyl-D-alanyl-D-alanine + di-trans,octa-cis-undecaprenyl phosphate = Mur2Ac(oyl-L-Ala-gamma-D-Glu-L-Lys-D-Ala-D-Ala)-di-trans,octa-cis-undecaprenyl diphosphate + UMP. Its pathway is cell wall biogenesis; peptidoglycan biosynthesis. Functionally, catalyzes the initial step of the lipid cycle reactions in the biosynthesis of the cell wall peptidoglycan: transfers peptidoglycan precursor phospho-MurNAc-pentapeptide from UDP-MurNAc-pentapeptide onto the lipid carrier undecaprenyl phosphate, yielding undecaprenyl-pyrophosphoryl-MurNAc-pentapeptide, known as lipid I. This chain is Phospho-N-acetylmuramoyl-pentapeptide-transferase, found in Limosilactobacillus reuteri (strain DSM 20016) (Lactobacillus reuteri).